Here is a 162-residue protein sequence, read N- to C-terminus: MERILLCFIVATLVAISMANPRPISIDPPCWTCYYRDSSGNCAFDAIACGGARKRVPKPISIDPPCRTCYYRDSSGNCVYDAFGCGGARKRVPKPISIDPPCRTCYYRDSSGNCVYDAFGCGGARKRVPKPISIDPPCRFCYHRDGSGNCVYDAYGCGAVRK.

Residues 1–19 (MERILLCFIVATLVAISMA) form the signal peptide. The propeptide occupies 20-23 (NPRP). Intrachain disulfides connect cysteine 30–cysteine 42 and cysteine 33–cysteine 49. Residues 56-59 (VPKP) constitute a propeptide that is removed on maturation. Intrachain disulfides connect cysteine 66-cysteine 78 and cysteine 69-cysteine 85. A propeptide spanning residues 92-95 (VPKP) is cleaved from the precursor. 2 disulfides stabilise this stretch: cysteine 102–cysteine 114 and cysteine 105–cysteine 121. Positions 128–131 (VPKP) are excised as a propeptide. 2 disulfide bridges follow: cysteine 138–cysteine 150 and cysteine 141–cysteine 157.

It belongs to the sea anemone BBH family.

Its subcellular location is the secreted. The protein localises to the nematocyst. Functionally, affects the ASIC3 channel (ACCN3) and produces analgesic effects. It produces a reversible inhibition effect on both the transient and the sustained current of human ASIC3 channels expressed in X.laevis oocytes. It completely blocks the transient component (IC(50)=10 uM) and partially (48%) inhibits the amplitude of the sustained component (IC(50)=1.44 uM). Using in vivo tests in mice, it reverses inflammatory and acid-induced pain. In terms of biological role, does not affect the ASIC3 channel. Does not cause lethality or paralysis of noble crayfish (A.astacus) at a dose of 1 mg/kg. The polypeptide is Precursor protein UG (Urticina grebelnyi (Painted anemone)).